Consider the following 719-residue polypeptide: Putative ankyrin repeat protein RBE_0319 (719 aa).

ANK repeat units lie at residues 377–406 (VAEE…EISS), 408–438 (TLIK…NINE), 442–472 (NGGT…EVNK), 476–506 (YGFT…EINQ), 510–540 (YQTT…KFNE), 544–572 (LGYT…DINQ), 576–605 (DGYT…NVNE), 609–639 (HGLT…EVSE), and 642–672 (QYGT…NLNK).

This is Putative ankyrin repeat protein RBE_0319 from Rickettsia bellii (strain RML369-C).